A 478-amino-acid chain; its full sequence is Cytochrome c-552 (478 aa).

The first 26 residues, 1–26, serve as a signal peptide directing secretion; the sequence is MTRIKINARRIFSLLIPFFFFTSVHA. A heme c-binding site is contributed by histidine 94. Positions 122, 125, and 126 each coordinate heme. 6 residues coordinate heme c: cysteine 160, cysteine 163, histidine 164, cysteine 209, cysteine 212, and histidine 213. Ca(2+) is bound by residues glutamate 215, tyrosine 216, lysine 261, and glutamine 263. Tyrosine 216 contributes to the substrate binding site. Position 264 (histidine 264) interacts with substrate. Residues histidine 275, cysteine 282, cysteine 285, histidine 286, histidine 301, cysteine 314, cysteine 317, histidine 318, and histidine 393 each contribute to the heme c site.

This sequence belongs to the cytochrome c-552 family. Ca(2+) serves as cofactor. Heme c is required as a cofactor.

The protein resides in the periplasm. The catalysed reaction is 6 Fe(III)-[cytochrome c] + NH4(+) + 2 H2O = 6 Fe(II)-[cytochrome c] + nitrite + 8 H(+). It participates in nitrogen metabolism; nitrate reduction (assimilation). In terms of biological role, catalyzes the reduction of nitrite to ammonia, consuming six electrons in the process. This Shigella flexneri protein is Cytochrome c-552.